A 697-amino-acid chain; its full sequence is Pentatricopeptide repeat-containing protein At2g13600 (697 aa).

PPR repeat units lie at residues 18–53 (DSSP…GFSN), 54–84 (EIFI…MPQR), 85–115 (NIYT…MPER), 116–150 (DQCT…GFVL), 151–185 (NEYS…PFLS), 186–216 (DVYI…MGDR), 217–251 (NVVS…RVEP), 252–282 (DEVT…VVKN), 288–322 (DIIL…NVIA), 324–349 (TSMI…MAER), 350–384 (NVVS…SVCP), 385–419 (THYS…GFKF), 426–456 (DIFV…MMER), 457–491 (DCVS…GEKP), 492–527 (DHIT…GVAP), and 528–558 (LRDH…MPMQ). The type E motif stretch occupies residues 563 to 638 (IWGSLLAACK…QPGCSWIKIQ (76 aa)). Residues 639–669 (GHDHVFMVKDKSHPRKKQIHSLLDILIAEMR) form a type E(+) motif region.

It belongs to the PPR family. PCMP-E subfamily.

This is Pentatricopeptide repeat-containing protein At2g13600 (PCMP-E76) from Arabidopsis thaliana (Mouse-ear cress).